The sequence spans 410 residues: MLRFGVNQKTSLLLTALLSCGLLIFSPVSQSSDLNQIQKQIKQQESKIEKQKREQAKLQANLKKHESKINSVEGELLETEISLKEIRKQIADADKQLKQLEKQEREQKARLTKQIDIIYRSGINPSLIERMFAQDPTKAERMKVYYQHLNQVRIEMINNLKATQAQIAVQKKAILSQQKNHRNQLSTQKKQQQALQKAQQEHQSTLNELNKNLALDQDKLNTLKANEQALRQEIQRAEQAAREQEKREREALAQRQKAEEKRTSKPYQPTVQERQLLNSTSGLGAAKKQYSLPVSGSILHTFGSIQAGEVRWKGMVIGASAGTPVKAIAAGRVILAGYLNGYGYMVIVKHGETDLSLYGFNQAVSVKVGQLVSAGQVIAQVGNTGEISRSALYFGISRKGTPVNPAGWVR.

The segment covering 178 to 187 has biased composition (polar residues); it reads QKNHRNQLST. 2 disordered regions span residues 178–203 and 236–272; these read QKNHRNQLSTQKKQQQALQKAQQEHQ and RAEQAAREQEKREREALAQRQKAEEKRTSKPYQPTVQ. The segment covering 188-198 has biased composition (low complexity); that stretch reads QKKQQQALQKA. Residues 236-263 are compositionally biased toward basic and acidic residues; the sequence is RAEQAAREQEKREREALAQRQKAEEKRT.

This is an uncharacterized protein from Haemophilus influenzae (strain ATCC 51907 / DSM 11121 / KW20 / Rd).